The following is a 368-amino-acid chain: MTNSHSADFKQQRIRVASQSSYEVVIDRGIDFATEEILKAAGATANYLIIHQPALADRAAELSKRLSAAGYAAHTHQIDDAESAKTAQSAAECWDVCAQVGLTRADTIIGLGGGAATDLAGFIAATWMRGIKVVHYPTTLLAMVDAAVGGKTGINTPAGKNLVGSFHEPSAVIVDLEVLETLPEAEMIAGSAEIVKAGFIADTEILGIYEADPQAALDPHGSLPELIARAIQVKADVVAVDLKESSLREILNYGHTYGHAVEHYEDYRWRHGQAVAVGMIFEAELAKAAGLLSEADVRRHRDILNSVGLATSYDGAELDELLAAMGRDKKNKGGKIRFVVLEQIGKPTRLEGPSEELLRAAYAASVGA.

NAD(+)-binding positions include 80-85 (DAESAK), 114-118 (GAATD), 138-139 (TT), lysine 151, and lysine 160. Zn(2+) contacts are provided by glutamate 193, histidine 255, and histidine 271.

Belongs to the sugar phosphate cyclases superfamily. Dehydroquinate synthase family. Co(2+) serves as cofactor. Zn(2+) is required as a cofactor. It depends on NAD(+) as a cofactor.

Its subcellular location is the cytoplasm. It catalyses the reaction 7-phospho-2-dehydro-3-deoxy-D-arabino-heptonate = 3-dehydroquinate + phosphate. The protein operates within metabolic intermediate biosynthesis; chorismate biosynthesis; chorismate from D-erythrose 4-phosphate and phosphoenolpyruvate: step 2/7. Catalyzes the conversion of 3-deoxy-D-arabino-heptulosonate 7-phosphate (DAHP) to dehydroquinate (DHQ). The protein is 3-dehydroquinate synthase of Corynebacterium jeikeium (strain K411).